The following is a 588-amino-acid chain: Aspartate--tRNA ligase (588 aa).

E172 serves as a coordination point for L-aspartate. The tract at residues 196–199 (QLFK) is aspartate. Residue R218 coordinates L-aspartate. Residues 218-220 (RDE) and Q227 contribute to the ATP site. H449 contributes to the L-aspartate binding site. Position 483 (E483) interacts with ATP. R490 contacts L-aspartate. ATP is bound at residue 535-538 (GLDR).

The protein belongs to the class-II aminoacyl-tRNA synthetase family. Type 1 subfamily. In terms of assembly, homodimer.

The protein localises to the cytoplasm. It carries out the reaction tRNA(Asp) + L-aspartate + ATP = L-aspartyl-tRNA(Asp) + AMP + diphosphate. In terms of biological role, catalyzes the attachment of L-aspartate to tRNA(Asp) in a two-step reaction: L-aspartate is first activated by ATP to form Asp-AMP and then transferred to the acceptor end of tRNA(Asp). This chain is Aspartate--tRNA ligase, found in Pasteurella multocida (strain Pm70).